Reading from the N-terminus, the 130-residue chain is Large ribosomal subunit protein bL20c (130 aa).

Belongs to the bacterial ribosomal protein bL20 family.

The protein localises to the plastid. The protein resides in the chloroplast. Its function is as follows. Binds directly to 23S ribosomal RNA and is necessary for the in vitro assembly process of the 50S ribosomal subunit. It is not involved in the protein synthesizing functions of that subunit. The sequence is that of Large ribosomal subunit protein bL20c from Fagopyrum esculentum subsp. ancestrale (Wild buckwheat).